Consider the following 475-residue polypeptide: BTB/POZ domain-containing protein 10 (475 aa).

The interval 1 to 143 is disordered; the sequence is MAGRPHPYDG…SSQSSSDGSC (143 aa). The segment covering 22-31 has biased composition (basic residues); sequence LHSRPRKLYK. Over residues 57 to 80 the composition is skewed to basic and acidic residues; it reads GHERSRDRRRSSDRSRDSSHERTE. The segment covering 81–94 has biased composition (polar residues); that stretch reads SQLTPCIRNVTSPT. Residues 97 to 107 show a composition bias toward basic and acidic residues; it reads HHVEREKDHSS. The span at 108–142 shows a compositional bias: low complexity; sequence SRPSSPRPQKASPNGSISSAGNSSRNSSQSSSDGS. An interaction with AKT family members region spans residues 146–475; sequence AGEMVFVYEN…LDPDAQNPTL (330 aa). A BTB domain is found at 167 to 241; sequence ERVTLIVDNT…YKTGIIRCPD (75 aa). Residues 456–475 form a disordered region; that stretch reads PIHPPSGNSDLDPDAQNPTL.

As to quaternary structure, interacts (via C-terminal 330-amino-acid region) with AKT1; AKT2 and AKT3. Interacts with PPP2CA and PPP1CA.

Its subcellular location is the nucleus. The protein resides in the cytoplasm. In terms of biological role, plays a major role as an activator of AKT family members by inhibiting PPP2CA-mediated dephosphorylation, thereby keeping AKTs activated. Plays a role in preventing motor neuronal death and in accelerating the growth of pancreatic beta cells. In Pongo abelii (Sumatran orangutan), this protein is BTB/POZ domain-containing protein 10 (BTBD10).